Here is a 340-residue protein sequence, read N- to C-terminus: Tetrathionate reductase subunit C (340 aa).

Transmembrane regions (helical) follow at residues 19-39 (WLPW…AALF), 57-77 (ALLI…ADLH), 94-114 (WMPW…LWFL), 128-148 (VTKW…IYTG), 164-184 (AFPV…MIVA), 195-215 (ILWG…MWVS), 236-256 (YYAV…SLAL), 266-286 (VLLV…LLIQ), and 306-326 (TDGW…LIII).

It belongs to the NrfD family. As to quaternary structure, probably composed of three subunits: TtrA, TtrB and TtrC.

It is found in the cell inner membrane. Part of a membrane-bound tetrathionate reductase that catalyzes the reduction of tetrathionate to thiosulfate. TtrC probably anchors TtrA and TtrB to the periplasmic face of the cytoplasmic membrane. May transfer electrons from membrane quinol to TtrB. During mice infection, the ability to use tetrathionate as an electron acceptor is a growth advantage for S.typhimurium over the competing microbiota in the lumen of the inflamed gut. This is Tetrathionate reductase subunit C (ttrC) from Salmonella typhimurium (strain LT2 / SGSC1412 / ATCC 700720).